The chain runs to 285 residues: Ubiquinone biosynthesis protein COQ4, mitochondrial (285 aa).

The N-terminal 11 residues, 1–11 (MPPAVRQGMRT), are a transit peptide targeting the mitochondrion. Zn(2+) contacts are provided by His-166, Asp-167, His-170, and Glu-182.

It belongs to the COQ4 family. Component of a multi-subunit COQ enzyme complex, composed of at least COQ3, COQ4, COQ5, COQ6, COQ7 and COQ9. Zn(2+) serves as cofactor.

It is found in the mitochondrion inner membrane. The enzyme catalyses a 4-hydroxy-3-methoxy-5-(all-trans-polyprenyl)benzoate + H(+) = a 2-methoxy-6-(all-trans-polyprenyl)phenol + CO2. The protein operates within cofactor biosynthesis; ubiquinone biosynthesis. Its function is as follows. Lyase that catalyzes the C1-decarboxylation of 4-hydroxy-3-methoxy-5-(all-trans-polyprenyl)benzoic acid into 2-methoxy-6-(all-trans-polyprenyl)phenol during ubiquinone biosynthesis. The chain is Ubiquinone biosynthesis protein COQ4, mitochondrial from Paracoccidioides lutzii (strain ATCC MYA-826 / Pb01) (Paracoccidioides brasiliensis).